Reading from the N-terminus, the 295-residue chain is Zinc finger C2H2 protein ECU08_0560 (295 aa).

2 consecutive C2H2-type zinc fingers follow at residues 219–243 and 249–273; these read FVCTYNDCKRAFKRYEHLKRHNLMH and HKCRFPGCSKAFSRSDNLSQHYKVH.

The sequence is that of Zinc finger C2H2 protein ECU08_0560 from Encephalitozoon cuniculi (strain GB-M1) (Microsporidian parasite).